Here is a 398-residue protein sequence, read N- to C-terminus: Phosphoglycerate kinase (398 aa).

Residues 21-23 (DFN), R36, 59-62 (HLGR), R119, and R157 each bind substrate. ATP contacts are provided by residues K208, G296, E327, and 354-357 (GGDS).

This sequence belongs to the phosphoglycerate kinase family. As to quaternary structure, monomer.

It localises to the cytoplasm. It carries out the reaction (2R)-3-phosphoglycerate + ATP = (2R)-3-phospho-glyceroyl phosphate + ADP. It functions in the pathway carbohydrate degradation; glycolysis; pyruvate from D-glyceraldehyde 3-phosphate: step 2/5. The protein is Phosphoglycerate kinase of Streptococcus agalactiae serotype III (strain NEM316).